The primary structure comprises 311 residues: Malate dehydrogenase (311 aa).

Residues 7-13 (GAAGGIG) and Asp34 contribute to the NAD(+) site. Substrate is bound by residues Arg81 and Arg87. Residues Asn94 and 117-119 (ITN) each bind NAD(+). Substrate is bound by residues Asn119 and Arg153. His177 acts as the Proton acceptor in catalysis. Met227 contributes to the NAD(+) binding site.

It belongs to the LDH/MDH superfamily. MDH type 1 family. In terms of assembly, homodimer.

It carries out the reaction (S)-malate + NAD(+) = oxaloacetate + NADH + H(+). Functionally, catalyzes the reversible oxidation of malate to oxaloacetate. In Shewanella frigidimarina (strain NCIMB 400), this protein is Malate dehydrogenase.